Reading from the N-terminus, the 608-residue chain is Albumin (608 aa).

The signal sequence occupies residues 1–18 (MKWVTFLLLLFVSGSAFS). A propeptide spanning residues 19–24 (RGVFRR) is cleaved from the precursor. Albumin domains lie at 19–211 (RGVF…GVKE), 212–403 (KALV…EFQP), and 404–601 (LVEE…NLVT). Residue His-27 coordinates Cu cation. Residue Ser-29 is modified to Phosphoserine. The Ca(2+) site is built by Glu-30 and Asp-37. Cys-77 and Cys-86 form a disulfide bridge. Phosphoserine occurs at positions 82 and 89. Residue His-91 coordinates Zn(2+). Cystine bridges form between Cys-99–Cys-115, Cys-114–Cys-125, Cys-148–Cys-193, Cys-192–Cys-201, Cys-224–Cys-270, and Cys-269–Cys-277. The residue at position 229 (Lys-229) is an N6-succinyllysine. Glu-268 serves as a coordination point for Ca(2+). His-271 and Asp-273 together coordinate Zn(2+). 3 residues coordinate Ca(2+): Asp-273, Glu-276, and Asp-279. Intrachain disulfides connect Cys-289/Cys-303, Cys-302/Cys-313, Cys-340/Cys-385, Cys-384/Cys-393, Cys-416/Cys-462, Cys-461/Cys-472, Cys-485/Cys-501, and Cys-500/Cys-511. Ser-297 is subject to Phosphoserine. Ser-443 is modified (phosphoserine). Thr-444 and Thr-446 each carry phosphothreonine. Lys-460 carries the N6-succinyllysine modification. A Phosphoserine modification is found at Ser-513. Disulfide bonds link Cys-538–Cys-583 and Cys-582–Cys-591. The residue at position 543 (Lys-543) is an N6-succinyllysine. Lys-558 is modified (N6-methyllysine). Thr-570 bears the Phosphothreonine mark. An N6-succinyllysine modification is found at Lys-588.

Belongs to the ALB/AFP/VDB family. Part of a complex composed of complement component C3, CLCA1/CLCA3, A2ML1/OH and ALB/serum albumin. Interacts with FCGRT; this interaction regulates ALB homeostasis. Interacts with TASOR. In plasma, occurs in a covalently-linked complex with chromophore-bound alpha-1-microglobulin; this interaction does not prevent fatty acid binding to ALB. In terms of processing, phosphorylated by FAM20C in the extracellular medium. Plasma. Expressed in the granular cells within the cerebellum.

It is found in the secreted. Binds water, Ca(2+), Na(+), K(+), fatty acids, hormones, bilirubin and drugs. Its main function is the regulation of the colloidal osmotic pressure of blood. Major zinc transporter in plasma, typically binds about 80% of all plasma zinc. Major calcium and magnesium transporter in plasma, binds approximately 45% of circulating calcium and magnesium in plasma. Potentially has more than two calcium-binding sites and might additionally bind calcium in a non-specific manner. The shared binding site between zinc and calcium at residue Asp-273 suggests a crosstalk between zinc and calcium transport in the blood. The rank order of affinity is zinc &gt; calcium &gt; magnesium. Binds to the bacterial siderophore enterobactin and inhibits enterobactin-mediated iron uptake of E.coli from ferric transferrin, and may thereby limit the utilization of iron and growth of enteric bacteria such as E.coli. Does not prevent iron uptake by the bacterial siderophore aerobactin. The protein is Albumin (Alb) of Mus musculus (Mouse).